A 348-amino-acid chain; its full sequence is Anthranilate phosphoribosyltransferase (348 aa).

5-phospho-alpha-D-ribose 1-diphosphate is bound by residues Gly-81, Gly-84 to Asp-85, Asn-91 to Thr-94, Lys-109 to Gly-117, and Ser-121. Residue Gly-81 coordinates anthranilate. Residue Ser-93 coordinates Mg(2+). Asn-112 contributes to the anthranilate binding site. Arg-167 serves as a coordination point for anthranilate. Mg(2+) contacts are provided by Asp-226 and Glu-227.

Belongs to the anthranilate phosphoribosyltransferase family. Homodimer. Requires Mg(2+) as cofactor.

It carries out the reaction N-(5-phospho-beta-D-ribosyl)anthranilate + diphosphate = 5-phospho-alpha-D-ribose 1-diphosphate + anthranilate. Its pathway is amino-acid biosynthesis; L-tryptophan biosynthesis; L-tryptophan from chorismate: step 2/5. Catalyzes the transfer of the phosphoribosyl group of 5-phosphorylribose-1-pyrophosphate (PRPP) to anthranilate to yield N-(5'-phosphoribosyl)-anthranilate (PRA). In Azotobacter vinelandii (strain DJ / ATCC BAA-1303), this protein is Anthranilate phosphoribosyltransferase.